The primary structure comprises 330 residues: 2-keto-3-deoxygluconate permease (330 aa).

A run of 10 helical transmembrane segments spans residues 10–30 (VPGG…TFAP), 42–62 (ALIT…GATI), 77–97 (LLLG…QFIP), 100–120 (GIQS…VMNE), 140–160 (GAFA…TFGV), 163–183 (LAAF…LGCI), 200–220 (PAII…GMLI), 224–244 (LLGI…LFLL), 254–274 (VAGV…YALA), and 289–309 (AIIA…TVWV).

Belongs to the KdgT transporter family.

Its subcellular location is the cell membrane. It carries out the reaction 2-dehydro-3-deoxy-D-gluconate(in) + H(+)(in) = 2-dehydro-3-deoxy-D-gluconate(out) + H(+)(out). In terms of biological role, catalyzes the proton-dependent uptake of 2-keto-3-deoxygluconate (KDG) into the cell. This chain is 2-keto-3-deoxygluconate permease, found in Bacillus subtilis (strain 168).